The chain runs to 228 residues: Cytidylate kinase (228 aa).

Residue 12 to 20 coordinates ATP; sequence GPSGAGKGT.

It belongs to the cytidylate kinase family. Type 1 subfamily.

The protein resides in the cytoplasm. The enzyme catalyses CMP + ATP = CDP + ADP. The catalysed reaction is dCMP + ATP = dCDP + ADP. In Photobacterium profundum (strain SS9), this protein is Cytidylate kinase.